Consider the following 274-residue polypeptide: uncharacterized protein (274 aa).

Residues 253–274 (QTGDVRTTEGTALTDDTTKRNI) form a disordered region.

This is an uncharacterized protein from Deinococcus radiodurans (strain ATCC 13939 / DSM 20539 / JCM 16871 / CCUG 27074 / LMG 4051 / NBRC 15346 / NCIMB 9279 / VKM B-1422 / R1).